We begin with the raw amino-acid sequence, 540 residues long: Esterase B1 (540 aa).

C68 and C81 form a disulfide bridge. The Acyl-ester intermediate role is filled by S191. Catalysis depends on charge relay system residues E324 and H442. N-linked (GlcNAc...) asparagine glycosylation occurs at N452.

This sequence belongs to the type-B carboxylesterase/lipase family.

The enzyme catalyses a carboxylic ester + H2O = an alcohol + a carboxylate + H(+). Overproduction of nonspecific esterases is a common mechanism of resistance to organophosphate insecticides. In Culex pipiens (House mosquito), this protein is Esterase B1 (B1).